The chain runs to 285 residues: Ribosomal RNA small subunit methyltransferase H (285 aa).

S-adenosyl-L-methionine is bound by residues 34-36 (AGH), Asp51, Phe75, Asp96, and His103. Residues 258–285 (PLVPSEKEAAQNPRARSAKLRAAEKEAP) are disordered.

Belongs to the methyltransferase superfamily. RsmH family.

It is found in the cytoplasm. The catalysed reaction is cytidine(1402) in 16S rRNA + S-adenosyl-L-methionine = N(4)-methylcytidine(1402) in 16S rRNA + S-adenosyl-L-homocysteine + H(+). Its function is as follows. Specifically methylates the N4 position of cytidine in position 1402 (C1402) of 16S rRNA. The chain is Ribosomal RNA small subunit methyltransferase H from Thermus thermophilus (strain ATCC BAA-163 / DSM 7039 / HB27).